The primary structure comprises 259 residues: Cell division protein DivIB (259 aa).

The Cytoplasmic segment spans residues 1 to 27 (MADGKVIDIEQKVPDFREQRRRKSRRR). The chain crosses the membrane as a helical span at residues 28-45 (LVLYISILAFFLLFVYYF). The Extracellular segment spans residues 46 to 259 (QSDYSTVGHV…QEEEEIEIEE (214 aa)). Residues 50 to 118 (STVGHVDVYG…RSITLYVDEY (69 aa)) form the POTRA domain.

This sequence belongs to the FtsQ/DivIB family. DivIB subfamily.

The protein resides in the cell membrane. Cell division protein that may be involved in stabilizing or promoting the assembly of the division complex. This Bacillus selenitireducens (strain ATCC 700615 / DSM 15326 / MLS10) protein is Cell division protein DivIB.